The sequence spans 815 residues: Serotype-specific mannosyltransferase WbdA (815 aa).

The tract at residues 1-374 (MSRAIIENAG…WANTAHLAIE (374 aa)) is alpha-(1-&gt;2)-mannosyltransferase. The tract at residues 431–804 (KLLVDISVLA…WKQSAEFLLK (374 aa)) is alpha-(1-&gt;3)-mannosyltransferase.

This sequence belongs to the glycosyltransferase group 1 family. Glycosyltransferase 4 subfamily. Monomer. Interacts with the C-terminal region of WbdD.

It localises to the cell inner membrane. It carries out the reaction [alpha-D-Man-(1-&gt;3)-alpha-D-Man-(1-&gt;3)-alpha-D-Man-(1-&gt;2)-alpha-D-Man-(1-&gt;2)](n)-alpha-D-Man-(1-&gt;3)-alpha-D-Man-(1-&gt;3)-alpha-D-Man-(1-&gt;3)-alpha-D-GlcNAc-di-trans,octa-cis-undecaprenyl diphosphate + 2 GDP-alpha-D-mannose = alpha-D-Man-(1-&gt;2)-alpha-D-Man-(1-&gt;2)-[alpha-D-Man-(1-&gt;3)-alpha-D-Man-(1-&gt;3)-alpha-D-Man-(1-&gt;2)-alpha-D-Man-(1-&gt;2)](n)-alpha-D-Man-(1-&gt;3)-alpha-D-Man-(1-&gt;3)-alpha-D-Man-(1-&gt;3)-alpha-D-GlcNAc-di-trans,octa-cis-undecaprenyl diphosphate + 2 GDP + 2 H(+). It catalyses the reaction alpha-D-Man-(1-&gt;2)-alpha-D-Man-(1-&gt;2)-[alpha-D-Man-(1-&gt;3)-alpha-D-Man-(1-&gt;3)-alpha-D-Man-(1-&gt;2)-alpha-D-Man-(1-&gt;2)](n)-alpha-D-Man-(1-&gt;3)-alpha-D-Man-(1-&gt;3)-alpha-D-Man-(1-&gt;3)-alpha-D-GlcNAc-di-trans,octa-cis-undecaprenyl diphosphate + 2 GDP-alpha-D-mannose = [alpha-D-Man-(1-&gt;3)-alpha-D-Man-(1-&gt;3)-alpha-D-Man-(1-&gt;2)-alpha-D-Man-(1-&gt;2)](n+1)-alpha-D-Man-(1-&gt;3)-alpha-D-Man-(1-&gt;3)-alpha-D-Man-(1-&gt;3)-alpha-D-GlcNAc-di-trans,octa-cis-undecaprenyl diphosphate + 2 GDP + 2 H(+). It participates in bacterial outer membrane biogenesis; LPS O-antigen biosynthesis. Its function is as follows. Mannosyltransferase involved in the biosynthesis of the repeat unit of the lipopolysaccharide (LPS) O-antigen region. Catalyzes the polymerization of a tetrasaccharide repeat unit containing two alpha-(1-&gt;3)- and two alpha-(1-&gt;2)-linked mannopyranose residues. The chain is Serotype-specific mannosyltransferase WbdA from Escherichia coli.